Consider the following 427-residue polypeptide: Tyrosine--tRNA ligase (427 aa).

Tyr33 is a binding site for L-tyrosine. Positions 38-47 (PTAPSLHVGN) match the 'HIGH' region motif. L-tyrosine-binding residues include Tyr168 and Gln172. Residues 228-232 (KFGKS) carry the 'KMSKS' region motif. Lys231 is an ATP binding site. Residues 358 to 426 (EHMLDLVAST…GKKHHYLIKV (69 aa)) form the S4 RNA-binding domain.

This sequence belongs to the class-I aminoacyl-tRNA synthetase family. TyrS type 1 subfamily. In terms of assembly, homodimer.

The protein resides in the cytoplasm. The catalysed reaction is tRNA(Tyr) + L-tyrosine + ATP = L-tyrosyl-tRNA(Tyr) + AMP + diphosphate + H(+). Catalyzes the attachment of tyrosine to tRNA(Tyr) in a two-step reaction: tyrosine is first activated by ATP to form Tyr-AMP and then transferred to the acceptor end of tRNA(Tyr). In Amoebophilus asiaticus (strain 5a2), this protein is Tyrosine--tRNA ligase.